Reading from the N-terminus, the 482-residue chain is Proline--tRNA ligase (482 aa).

Belongs to the class-II aminoacyl-tRNA synthetase family. ProS type 3 subfamily. As to quaternary structure, homodimer.

The protein resides in the cytoplasm. It catalyses the reaction tRNA(Pro) + L-proline + ATP = L-prolyl-tRNA(Pro) + AMP + diphosphate. Functionally, catalyzes the attachment of proline to tRNA(Pro) in a two-step reaction: proline is first activated by ATP to form Pro-AMP and then transferred to the acceptor end of tRNA(Pro). In Natronomonas pharaonis (strain ATCC 35678 / DSM 2160 / CIP 103997 / JCM 8858 / NBRC 14720 / NCIMB 2260 / Gabara) (Halobacterium pharaonis), this protein is Proline--tRNA ligase.